The chain runs to 547 residues: Chaperonin GroEL (547 aa).

ATP contacts are provided by residues 30–33, lysine 51, 87–91, glycine 415, and aspartate 495; these read TLGP and DGTTT. Positions 526–547 are disordered; sequence KKDTPVPPMPGGGMGGMGGMDF. A compositionally biased stretch (gly residues) spans 536 to 547; that stretch reads GGGMGGMGGMDF.

Belongs to the chaperonin (HSP60) family. As to quaternary structure, forms a cylinder of 14 subunits composed of two heptameric rings stacked back-to-back. Interacts with the co-chaperonin GroES.

The protein localises to the cytoplasm. It catalyses the reaction ATP + H2O + a folded polypeptide = ADP + phosphate + an unfolded polypeptide.. In terms of biological role, together with its co-chaperonin GroES, plays an essential role in assisting protein folding. The GroEL-GroES system forms a nano-cage that allows encapsulation of the non-native substrate proteins and provides a physical environment optimized to promote and accelerate protein folding. This is Chaperonin GroEL from Bartonella henselae (strain ATCC 49882 / DSM 28221 / CCUG 30454 / Houston 1) (Rochalimaea henselae).